The following is a 99-amino-acid chain: U1-theraphotoxin-Lsp1a (99 aa).

The N-terminal stretch at 1-23 (MRSLTLAALLLCSLLLVFHTSAA) is a signal peptide. A propeptide spanning residues 24–50 (AELEAQEGHLMIPGDTDTALETVDDER) is cleaved from the precursor. Intrachain disulfides connect C54/C67, C58/C91, C72/C74, and C85/C96.

Belongs to the neurotoxin 12 (Hwtx-2) family. 04 (lasiotoxin) subfamily. As to expression, expressed by the venom gland.

The protein localises to the secreted. Toxin that causes irreversible contractile paralysis into adult Aedes aegypti resulting in 100% mortality after 24 hours. The chain is U1-theraphotoxin-Lsp1a from Lasiodora sp. (strain IBSP 8539) (Brazilian salmon pink birdeater).